We begin with the raw amino-acid sequence, 156 residues long: MNIIKANVAAPDARVAITIARFNQFINDSLLDGAVDALTRIGQVKDDNITVVWVPGAYELPLATEALAKSGKYDAVVALGTVIRGGTAHFEYVAGGASNGLASVAQDSGVPVAFGVLTTESIEQAIERAGTKAGNKGAEAALTALEMINVLKAIKA.

5-amino-6-(D-ribitylamino)uracil-binding positions include phenylalanine 22, 57 to 59 (AYE), and 81 to 83 (TVI). 86–87 (GT) lines the (2S)-2-hydroxy-3-oxobutyl phosphate pocket. Histidine 89 functions as the Proton donor in the catalytic mechanism. A 5-amino-6-(D-ribitylamino)uracil-binding site is contributed by phenylalanine 114. Arginine 128 is a (2S)-2-hydroxy-3-oxobutyl phosphate binding site.

It belongs to the DMRL synthase family. In terms of assembly, forms an icosahedral capsid composed of 60 subunits, arranged as a dodecamer of pentamers.

The enzyme catalyses (2S)-2-hydroxy-3-oxobutyl phosphate + 5-amino-6-(D-ribitylamino)uracil = 6,7-dimethyl-8-(1-D-ribityl)lumazine + phosphate + 2 H2O + H(+). It functions in the pathway cofactor biosynthesis; riboflavin biosynthesis; riboflavin from 2-hydroxy-3-oxobutyl phosphate and 5-amino-6-(D-ribitylamino)uracil: step 1/2. Its function is as follows. Catalyzes the formation of 6,7-dimethyl-8-ribityllumazine by condensation of 5-amino-6-(D-ribitylamino)uracil with 3,4-dihydroxy-2-butanone 4-phosphate. This is the penultimate step in the biosynthesis of riboflavin. In Salmonella agona (strain SL483), this protein is 6,7-dimethyl-8-ribityllumazine synthase.